The chain runs to 254 residues: Probable protein S-acyltransferase 15 (254 aa).

2 helical membrane-spanning segments follow: residues M1–S21 and A28–V48. The region spanning R75–F125 is the DHHC domain. C105 acts as the S-palmitoyl cysteine intermediate in catalysis. The next 2 helical transmembrane spans lie at A119–V139 and I164–I184.

This sequence belongs to the DHHC palmitoyltransferase family.

The protein localises to the endoplasmic reticulum membrane. It localises to the cytoplasmic vesicle membrane. It catalyses the reaction L-cysteinyl-[protein] + hexadecanoyl-CoA = S-hexadecanoyl-L-cysteinyl-[protein] + CoA. In terms of biological role, palmitoyl acyltransferase. This Arabidopsis thaliana (Mouse-ear cress) protein is Probable protein S-acyltransferase 15 (PAT15).